The chain runs to 557 residues: Hepatocyte nuclear factor 1-beta (557 aa).

Residues 1 to 31 form a dimerization region; sequence MVSKLTSLQQELLSALLSSGVTKEVLIQALE. The 32-residue stretch at 1–32 folds into the HNF-p1 domain; sequence MVSKLTSLQQELLSALLSSGVTKEVLIQALEE. 4 positions are modified to phosphoserine: Ser-49, Ser-52, Ser-75, and Ser-80. Residues 66 to 85 are disordered; it reads TNGHAKGRLSGDEGSEDGDD. Residues 93-188 enclose the POU-specific atypical domain; sequence KELQALNTEE…ILRQFNQTVQ (96 aa). The homeobox; HNF1-type DNA-binding region spans 231–311; it reads MRRNRFKWGP…NRRKEEAFRQ (81 aa). The interval 324-370 is disordered; the sequence is HNLNPLLTHGSPHHQPSSSPPNKLSGVRYSQPGNNEVTSSSTISHHG. Over residues 354–370 the composition is skewed to polar residues; that stretch reads QPGNNEVTSSSTISHHG.

It belongs to the HNF1 homeobox family. Binds DNA as a dimer. Can form homodimer or heterodimer with HNF1-alpha. Interacts (via HNF-p1 domain) with PCBD1; the interaction increases its transactivation activity. In terms of tissue distribution, liver, kidney and intestine.

The protein resides in the nucleus. In terms of biological role, transcription factor that binds to the inverted palindrome 5'-GTTAATNATTAAC-3'. Binds to the FPC element in the cAMP regulatory unit of the PLAU gene. Transcriptional activity is increased by coactivator PCBD1. This Rattus norvegicus (Rat) protein is Hepatocyte nuclear factor 1-beta (Hnf1b).